A 630-amino-acid polypeptide reads, in one-letter code: Probable potassium transport system protein Kup (630 aa).

A run of 12 helical transmembrane segments spans residues 17-37 (LAIA…LYSL), 51-71 (PSAI…VVGI), 105-125 (ITGL…GDAV), 144-164 (PQLS…LFWI), 175-195 (LFGP…IYHI), 218-238 (VLLA…AEAL), 255-275 (YVLV…LLLL), 283-303 (PFFL…STVA), 344-364 (IYVP…VIGF), 374-394 (YGIA…VVMV), 402-422 (LLVA…FGAN), and 428-448 (QGGW…MTWY).

This sequence belongs to the HAK/KUP transporter (TC 2.A.72) family.

The protein resides in the cell inner membrane. It carries out the reaction K(+)(in) + H(+)(in) = K(+)(out) + H(+)(out). Functionally, transport of potassium into the cell. Likely operates as a K(+):H(+) symporter. In Burkholderia pseudomallei (strain K96243), this protein is Probable potassium transport system protein Kup.